A 259-amino-acid chain; its full sequence is Global transcriptional regulator CodY (259 aa).

Residues 1 to 155 are GAF domain; that stretch reads MNLLEKTRKI…GATVVGMEIL (155 aa). A DNA-binding region (H-T-H motif) is located at residues 203-222; it reads ASKIADRVGITRSVIVNALR. Position 215 is a phosphoserine (S215).

Belongs to the CodY family.

It is found in the cytoplasm. DNA-binding global transcriptional regulator which is involved in the adaptive response to starvation and acts by directly or indirectly controlling the expression of numerous genes in response to nutrient availability. During rapid exponential growth, CodY is highly active and represses genes whose products allow adaptation to nutrient depletion. The polypeptide is Global transcriptional regulator CodY (Lysinibacillus sphaericus (strain C3-41)).